A 171-amino-acid chain; its full sequence is 3-hydroxydecanoyl-[acyl-carrier-protein] dehydratase (171 aa).

H70 is a catalytic residue.

This sequence belongs to the thioester dehydratase family. FabA subfamily. In terms of assembly, homodimer.

The protein resides in the cytoplasm. It catalyses the reaction a (3R)-hydroxyacyl-[ACP] = a (2E)-enoyl-[ACP] + H2O. It carries out the reaction (3R)-hydroxydecanoyl-[ACP] = (2E)-decenoyl-[ACP] + H2O. The enzyme catalyses (2E)-decenoyl-[ACP] = (3Z)-decenoyl-[ACP]. Its pathway is lipid metabolism; fatty acid biosynthesis. Its function is as follows. Necessary for the introduction of cis unsaturation into fatty acids. Catalyzes the dehydration of (3R)-3-hydroxydecanoyl-ACP to E-(2)-decenoyl-ACP and then its isomerization to Z-(3)-decenoyl-ACP. Can catalyze the dehydratase reaction for beta-hydroxyacyl-ACPs with saturated chain lengths up to 16:0, being most active on intermediate chain length. The chain is 3-hydroxydecanoyl-[acyl-carrier-protein] dehydratase from Methylobacillus flagellatus (strain ATCC 51484 / DSM 6875 / VKM B-1610 / KT).